The following is a 960-amino-acid chain: MLLLLLVPLFLRPLGAGGAQTPNATSEGCQIIHPPWEGGIRYRGLTRDQVKAINFLPVDYEIEYVCRGEREVVGPKVRKCLANGSWTDMDTPSRCVRICSKSYLTLENGKVFLTGGDLPALDGARVEFRCDPDFHLVGSSRSVCSQGQWSTPKPHCQVNRTPHSERRAVYIGALFPMSGGWPGGQACQPAVEMALEDVNSRRDILPDYELKLIHHDSKCDPGQATKYLYELLYNDPIKIILMPGCSSVSTLVAEAARMWNLIVLSYGSSSPALSNRQRFPTFFRTHPSATLHNPTRVKLFEKWGWKKIATIQQTTEVFTSTLDDLEERVKEAGIEITFRQSFFSDPAVPVKNLKRQDARIIVGLFYETEARKVFCEVYKERLFGKKYVWFLIGWYADNWFKTYDPSINCTVEEMTEAVEGHITTEIVMLNPANTRSISNMTSQEFVEKLTKRLKRHPEETGGFQEAPLAYDAIWALALALNKTSGGGGRSGVRLEDFNYNNQTITDQIYRAMNSSSFEGVSGHVVFDASGSRMAWTLIEQLQGGSYKKIGYYDSTKDDLSWSKTDKWIGGSPPADQTLVIKTFRFLSQKLFISVSVLSSLGIVLAVVCLSFNIYNSHVRYIQNSQPNLNNLTAVGCSLALAAVFPLGLDGYHIGRSQFPFVCQARLWLLGLGFSLGYGSMFTKIWWVHTVFTKKEEKKEWRKTLEPWKLYATVGLLVGMDVLTLAIWQIVDPLHRTIETFAKEEPKEDIDVSILPQLEHCSSKKMNTWLGIFYGYKGLLLLLGIFLAYETKSVSTEKINDHRAVGMAIYNVAVLCLITAPVTMILSSQQDAAFAFASLAIVFSSYITLVVLFVPKMRRLITRGEWQSETQDTMKTGSSTNNNEEEKSRLLEKENRELEKIIAEKEERVSELRHQLQSRQQLRSRRHPPTPPDPSGGLPRGPSEPPDRLSCDGSRVHLLYK.

Residues 1 to 19 form the signal peptide; sequence MLLLLLVPLFLRPLGAGGA. Topologically, residues 20-590 are extracellular; the sequence is QTPNATSEGC…KTFRFLSQKL (571 aa). N23 and N83 each carry an N-linked (GlcNAc...) asparagine glycan. 2 consecutive Sushi domains span residues 29 to 95 and 97 to 158; these read CQII…PSRC and RICS…HCQV. Intrachain disulfides connect C99-C144, C130-C156, and C219-C245. Residues S246, S269, H286, and Y366 each coordinate 4-aminobutanoate. C375 and C409 are oxidised to a cystine. N408 and N439 each carry an N-linked (GlcNAc...) asparagine glycan. Residue E465 participates in 4-aminobutanoate binding. Residues N481, N501, and N513 are each glycosylated (N-linked (GlcNAc...) asparagine). Residues 591–611 form a helical membrane-spanning segment; it reads FISVSVLSSLGIVLAVVCLSF. Topologically, residues 612 to 630 are cytoplasmic; sequence NIYNSHVRYIQNSQPNLNN. The helical transmembrane segment at 631–651 threads the bilayer; sequence LTAVGCSLALAAVFPLGLDGY. Residues 652 to 666 lie on the Extracellular side of the membrane; the sequence is HIGRSQFPFVCQARL. The chain crosses the membrane as a helical span at residues 667 to 687; sequence WLLGLGFSLGYGSMFTKIWWV. The Cytoplasmic segment spans residues 688 to 709; the sequence is HTVFTKKEEKKEWRKTLEPWKL. A helical transmembrane segment spans residues 710–730; sequence YATVGLLVGMDVLTLAIWQIV. At 731–767 the chain is on the extracellular side; the sequence is DPLHRTIETFAKEEPKEDIDVSILPQLEHCSSKKMNT. Residues 768–788 traverse the membrane as a helical segment; it reads WLGIFYGYKGLLLLLGIFLAY. Over 789–803 the chain is Cytoplasmic; it reads ETKSVSTEKINDHRA. The helical transmembrane segment at 804–824 threads the bilayer; it reads VGMAIYNVAVLCLITAPVTMI. Topologically, residues 825–832 are extracellular; that stretch reads LSSQQDAA. Residues 833-853 form a helical membrane-spanning segment; the sequence is FAFASLAIVFSSYITLVVLFV. Residues 854–960 lie on the Cytoplasmic side of the membrane; the sequence is PKMRRLITRG…DGSRVHLLYK (107 aa). Over residues 866-879 the composition is skewed to polar residues; that stretch reads QSETQDTMKTGSST. Disordered regions lie at residues 866 to 891 and 908 to 960; these read QSETQDTMKTGSSTNNNEEEKSRLLE and VSEL…LLYK. Residues 870 to 924 adopt a coiled-coil conformation; it reads QDTMKTGSSTNNNEEEKSRLLEKENRELEKIIAEKEERVSELRHQLQSRQQLRSR. At T872 the chain carries Phosphothreonine. The interval 887–915 is interaction with ATF4; that stretch reads SRLLEKENRELEKIIAEKEERVSELRHQL. At T929 the chain carries Phosphothreonine.

This sequence belongs to the G-protein coupled receptor 3 family. GABA-B receptor subfamily. In terms of assembly, heterodimer of GABBR1 and GABBR2. Homodimers may form, but are inactive. Interacts (via C-terminus) with ATF4 (via leucine zipper domain). Interacts with JAKMIP1. In terms of tissue distribution, ubiquitously expressed in tissues including the forebrain, cerebellum, eye, atrium, ventricle, lung, stomach, small intestine, colon, liver, spleen, kidney, urinary bladder and skeletal muscle. Expressed at low levels in testis, and more highly in brain regions. Expression is high the brain regions including cerebral cortical layers, with higher expression in VIb than in the II-V layers, pyramidal CA1-CA3 cell layers and granular cell layers of the hippocampus, granular cell layers of the dentate gyrus, including the caudate, putamen, nucleus accumbens and olfactory tubercle, the granular layer cell layers of the medial habenula, in the cerebellum, predominantly in Purkinje cells, and in the granule cell layer. Also expressed in areas of the brain including the medial geniculate nucleus, substantia nigra, pars compacta, the ventral tegmental area, and in several thalamic, amygdaloid and hypothalamic nuclei, such as the arcuate nucleus of the hypothalamus and mammilary bodies of the hypothalamus. Expressed in the amacrine cell of the retina. Expressed in the brain, spinal cord, stomach, testis, adrenal gland, pituitary, spleen and prostate. As to expression, expressed in the brain, spinal cord, stomach, testis, kidney and liver. In terms of tissue distribution, ubiquitously expressed. Expressed in the forebrain, cerebellum, eye, kidney and urinary bladder. As to expression, ubiquitously expressed with high expression in the pyramidal CA1-CA3 cell layers of the hippocampus, the granule cell layers of the dentate gyrus and olfactory tubercle, the whole cortex, and Purkinje cells of the cerebellum. Moderate expression in the granule cell layer of the cerebellum.

Its subcellular location is the cell membrane. The protein localises to the postsynaptic cell membrane. The protein resides in the cell projection. It is found in the dendrite. It localises to the perikaryon. Component of a heterodimeric G-protein coupled receptor for GABA, formed by GABBR1 and GABBR2. Within the heterodimeric GABA receptor, only GABBR1 seems to bind agonists, while GABBR2 mediates coupling to G proteins. Ligand binding causes a conformation change that triggers signaling via guanine nucleotide-binding proteins (G proteins) and modulates the activity of down-stream effectors, such as adenylate cyclase. Signaling inhibits adenylate cyclase, stimulates phospholipase A2, activates potassium channels, inactivates voltage-dependent calcium-channels and modulates inositol phospholipid hydrolysis. Calcium is required for high affinity binding to GABA. Plays a critical role in the fine-tuning of inhibitory synaptic transmission. Pre-synaptic GABA receptor inhibits neurotransmitter release by down-regulating high-voltage activated calcium channels, whereas postsynaptic GABA receptor decreases neuronal excitability by activating a prominent inwardly rectifying potassium (Kir) conductance that underlies the late inhibitory postsynaptic potentials. Not only implicated in synaptic inhibition but also in hippocampal long-term potentiation, slow wave sleep, muscle relaxation and antinociception. This chain is Gamma-aminobutyric acid type B receptor subunit 1 (Gabbr1), found in Rattus norvegicus (Rat).